The following is a 470-amino-acid chain: Cysteine--tRNA ligase (470 aa).

Position 27 (C27) interacts with Zn(2+). Positions 29–39 (PTVYNFFHIGN) match the 'HIGH' region motif. Residues C211, H236, and E240 each contribute to the Zn(2+) site. The short motif at 268 to 272 (KMSKS) is the 'KMSKS' region element. K271 provides a ligand contact to ATP.

Belongs to the class-I aminoacyl-tRNA synthetase family. As to quaternary structure, monomer. Requires Zn(2+) as cofactor.

The protein localises to the cytoplasm. The enzyme catalyses tRNA(Cys) + L-cysteine + ATP = L-cysteinyl-tRNA(Cys) + AMP + diphosphate. The sequence is that of Cysteine--tRNA ligase from Clostridium botulinum (strain Eklund 17B / Type B).